The sequence spans 97 residues: Large ribosomal subunit protein eL21 (97 aa).

Belongs to the eukaryotic ribosomal protein eL21 family.

The sequence is that of Large ribosomal subunit protein eL21 (rpl21e) from Archaeoglobus fulgidus (strain ATCC 49558 / DSM 4304 / JCM 9628 / NBRC 100126 / VC-16).